The primary structure comprises 341 residues: Tetraacyldisaccharide 4'-kinase (341 aa).

54–61 (TVGGAGKT) serves as a coordination point for ATP.

It belongs to the LpxK family.

The catalysed reaction is a lipid A disaccharide + ATP = a lipid IVA + ADP + H(+). It functions in the pathway glycolipid biosynthesis; lipid IV(A) biosynthesis; lipid IV(A) from (3R)-3-hydroxytetradecanoyl-[acyl-carrier-protein] and UDP-N-acetyl-alpha-D-glucosamine: step 6/6. Functionally, transfers the gamma-phosphate of ATP to the 4'-position of a tetraacyldisaccharide 1-phosphate intermediate (termed DS-1-P) to form tetraacyldisaccharide 1,4'-bis-phosphate (lipid IVA). This Brucella melitensis biotype 2 (strain ATCC 23457) protein is Tetraacyldisaccharide 4'-kinase.